The sequence spans 260 residues: Phosphate import ATP-binding protein PstB 1 (260 aa).

Residues 13 to 255 (VRVRDLNLWY…PHTKKAEDYI (243 aa)) form the ABC transporter domain. ATP is bound at residue 45-52 (GPSGCGKS).

This sequence belongs to the ABC transporter superfamily. Phosphate importer (TC 3.A.1.7) family. The complex is composed of two ATP-binding proteins (PstB), two transmembrane proteins (PstC and PstA) and a solute-binding protein (PstS).

The protein localises to the cell inner membrane. It catalyses the reaction phosphate(out) + ATP + H2O = ADP + 2 phosphate(in) + H(+). Part of the ABC transporter complex PstSACB involved in phosphate import. Responsible for energy coupling to the transport system. The chain is Phosphate import ATP-binding protein PstB 1 from Chromohalobacter salexigens (strain ATCC BAA-138 / DSM 3043 / CIP 106854 / NCIMB 13768 / 1H11).